The sequence spans 294 residues: Cytidine deaminase (294 aa).

2 CMP/dCMP-type deaminase domains span residues 48–168 and 186–294; these read DEDA…FGPK and LTGD…VLLA. 89–91 lines the substrate pocket; the sequence is NME. H102 contributes to the Zn(2+) binding site. E104 serves as the catalytic Proton donor. Zn(2+) contacts are provided by C129 and C132.

The protein belongs to the cytidine and deoxycytidylate deaminase family. As to quaternary structure, homodimer. Requires Zn(2+) as cofactor.

It catalyses the reaction cytidine + H2O + H(+) = uridine + NH4(+). The catalysed reaction is 2'-deoxycytidine + H2O + H(+) = 2'-deoxyuridine + NH4(+). In terms of biological role, this enzyme scavenges exogenous and endogenous cytidine and 2'-deoxycytidine for UMP synthesis. The chain is Cytidine deaminase from Escherichia coli (strain K12).